A 2385-amino-acid chain; its full sequence is Neuron navigator 3 (2385 aa).

A disordered region spans residues 17-38 (SKPVHTALPIPNLGTTGSQHCS). Polar residues predominate over residues 29–38 (LGTTGSQHCS). Positions 77–184 (KEDSKIYTDW…LFFSLSRYKQ (108 aa)) constitute a Calponin-homology (CH) domain. The interval 203–625 (VTHASPPSEA…LPQQQQHSHP (423 aa)) is disordered. Composition is skewed to polar residues over residues 210-243 (SEAS…TSQK), 258-279 (GSSS…FNSI), and 297-316 (KGPQ…STAG). The segment covering 318–329 (PPASAIPSPSAS) has biased composition (low complexity). Residues 335–352 (KSMNVKHSATSTMLTVKQ) show a composition bias toward polar residues. Low complexity-rich tracts occupy residues 353 to 363 (SSTATSPTPSS) and 427 to 439 (NSGL…TNSS). Residues 465-491 (PKEKEEKNRDKNKVCTEKPVKEEKDQV) are compositionally biased toward basic and acidic residues. Over residues 521-535 (IPSSSGIPKPGSKVP) the composition is skewed to low complexity. 3 stretches are compositionally biased toward polar residues: residues 537 to 548 (VKQTISPGSTAS), 557 to 567 (TKGSPSQSLSK), and 591 to 625 (ASPS…HSHP). Residues 679–707 (ETRRMRTVKNIADLRQNLEETMSSLRGTQ) are a coiled coil. Disordered stretches follow at residues 877–1312 (ADSW…SPLF), 1351–1370 (SSSS…TSLH), 1410–1468 (LSES…SAMS), 1650–1778 (GALN…KRQN), 1850–1881 (DRLK…SRQS), and 2360–2385 (SSTQ…ESTL). Positions 882-895 (DSSSVSSGLSDTLD) are enriched in low complexity. The segment covering 896–925 (NISTDDLNTTSSVSSYSNITVPSRKNTQLR) has biased composition (polar residues). Basic and acidic residues predominate over residues 942–959 (EELKKPEEDFDSHGDAGG). The segment covering 979–988 (ASLSVSQTGS) has biased composition (polar residues). The segment covering 1014-1026 (GKTDDAKASEKGK) has biased composition (basic and acidic residues). 2 stretches are compositionally biased toward low complexity: residues 1074–1092 (GSSA…GSAT) and 1157–1170 (SSTS…SSKS). Residues 1187–1196 (GRSSPVTVNQ) show a composition bias toward polar residues. 2 stretches are compositionally biased toward low complexity: residues 1206–1226 (VSDS…TSAS) and 1253–1263 (GAKAGGKSASA). A compositionally biased stretch (polar residues) spans 1264 to 1289 (PNTEGVKSSSVMPSPSTTLARQGSLE). The span at 1296-1305 (GSMGSAGGLS) shows a compositional bias: gly residues. Positions 1436–1445 (NQEEGKEWLR) are enriched in basic and acidic residues. Residues 1446–1462 (SHSTGGLQDTGNQSPLV) are compositionally biased toward polar residues. Phosphoserine is present on residues S1459 and S1463. Residues 1562-1653 (AEEKAHSEQI…AQAAIQGALN (92 aa)) are a coiled coil. Residues 1672-1689 (SVSSINSATSHSSIGSGN) are compositionally biased toward low complexity. The segment covering 1701-1714 (WVNSRGSELRSSFK) has biased composition (polar residues). Residues 1794–1861 (EAEAEIILQL…LKAETGNTAK (68 aa)) adopt a coiled-coil conformation. The span at 1867–1881 (SESSSSTSSSSSRQS) shows a compositional bias: low complexity.

This sequence belongs to the Nav/unc-53 family. In terms of tissue distribution, highly expressed in brain. Expressed at low levels in heart and placenta. Present in activated T-cells but not in resting T-cells (at protein level). Down-regulated in primary neuroblastoma.

It is found in the nucleus outer membrane. Its function is as follows. Plays a role in cell migration. May be involved in neuron regeneration. May regulate IL2 production by T-cells. In Homo sapiens (Human), this protein is Neuron navigator 3 (NAV3).